The primary structure comprises 174 residues: uncharacterized protein (174 aa).

Basic and acidic residues-rich tracts occupy residues 1–31 and 52–67; these read MDKHGVKTPLWKKETEELRAEDAEQEEGKEG and EPPRVAEEGEGRERRS. Residues 1 to 69 are disordered; the sequence is MDKHGVKTPL…GEGRERRSVS (69 aa).

This is an uncharacterized protein from Homo sapiens (Human).